Consider the following 248-residue polypeptide: Sugar fermentation stimulation protein homolog (248 aa).

It belongs to the SfsA family.

In Prochlorococcus marinus subsp. pastoris (strain CCMP1986 / NIES-2087 / MED4), this protein is Sugar fermentation stimulation protein homolog.